Reading from the N-terminus, the 1456-residue chain is Sterol 3-beta-glucosyltransferase (1456 aa).

The span at 1–12 (MASQDRGSDRTS) shows a compositional bias: basic and acidic residues. The tract at residues 1–229 (MASQDRGSDR…RSPAAAATGE (229 aa)) is disordered. Residues 13–22 (RRLTKKRKDG) show a composition bias toward basic residues. Positions 23–48 (KKPMRDVSLDMPERFKDGDDAHEDVT) are enriched in basic and acidic residues. Composition is skewed to polar residues over residues 54–63 (HTMSMNQSIF) and 109–123 (RLSTANDFQKTSGQT). The 48-residue stretch at 236–283 (KRIQHIFEFAQEEEVISEYPCWLLQSILLQGYMYITQKHICFYAYIPK) folds into the GRAM 1 domain. One can recognise a PH domain in the interval 287–384 (DVSKTGYLSK…WVKSIQKVIF (98 aa)). 2 disordered regions span residues 500 to 612 (LSPL…TASA) and 631 to 691 (NAFS…TRLS). Positions 510–523 (RSSMSDISVRSSVD) are enriched in low complexity. Composition is skewed to basic and acidic residues over residues 524-536 (ANRKNRDVRRSMD), 544-557 (WSLEGRRLSHEAHR), and 571-584 (RVGDRSPKSPRATD). Polar residues-rich tracts occupy residues 585-612 (SDSATFSLDPGTESSAAIQSMDDSTASA) and 631-650 (NAFSNGVNMSAHSQDTTRSS). The 67-residue stretch at 774–840 (DNFREHFAFR…KDIENVNKEK (67 aa)) folds into the GRAM 2 domain. Ser-966, Arg-967, Asp-969, Ala-1269, His-1271, His-1284, Ser-1287, Gly-1288, Thr-1289, Asp-1308, and Gln-1309 together coordinate UDP-alpha-D-glucose.

Belongs to the glycosyltransferase 28 family.

The protein resides in the cytoplasm. It is found in the preautophagosomal structure membrane. It catalyses the reaction a sterol + UDP-alpha-D-glucose = a sterol 3-beta-D-glucoside + UDP + H(+). The enzyme catalyses ergosterol + UDP-alpha-D-glucose = ergosteryl 3-beta-D-glucoside + UDP + H(+). Functionally, sterol glycosyltransferase responsible for the glycosylation of ergosterol to form ergosterol-glucoside. The sequence is that of Sterol 3-beta-glucosyltransferase from Leptosphaeria maculans (Blackleg fungus).